The following is a 288-amino-acid chain: Mediator of RNA polymerase II transcription subunit 8 (288 aa).

Residues 4–58 (EELKQLELLRNRFAQLTSNLGSLRTSVSNSNPLPTYESLQASVNILQANIRSIQD) adopt a coiled-coil conformation. Disordered regions lie at residues 122–150 (GGVH…APQD), 191–245 (VRTG…GGGM), and 266–288 (PGNV…APPR). Composition is skewed to acidic residues over residues 131 to 148 (DYDD…DDAP) and 200 to 221 (EESE…EDEA). Residues 180-228 (TAEERAAGIENVRTGLRQTLEESEDDDEDEEEEEEDEEEDEAAAAAGNA) are a coiled coil. A compositionally biased stretch (gly residues) spans 227-245 (NAGGLATGAGGSAAAGGGM).

Belongs to the Mediator complex subunit 8 family. In terms of assembly, component of the Mediator complex.

The protein resides in the nucleus. Its function is as follows. Component of the Mediator complex, a coactivator involved in the regulated transcription of nearly all RNA polymerase II-dependent genes. Mediator functions as a bridge to convey information from gene-specific regulatory proteins to the basal RNA polymerase II transcription machinery. Mediator is recruited to promoters by direct interactions with regulatory proteins and serves as a scaffold for the assembly of a functional preinitiation complex with RNA polymerase II and the general transcription factors. This Chaetomium globosum (strain ATCC 6205 / CBS 148.51 / DSM 1962 / NBRC 6347 / NRRL 1970) (Soil fungus) protein is Mediator of RNA polymerase II transcription subunit 8 (MED8).